The following is a 675-amino-acid chain: Polyphosphate kinase (675 aa).

Asparagine 42 is a binding site for ATP. 2 residues coordinate Mg(2+): arginine 372 and arginine 401. Histidine 431 (phosphohistidine intermediate) is an active-site residue. ATP contacts are provided by tyrosine 464, arginine 558, and histidine 586.

Belongs to the polyphosphate kinase 1 (PPK1) family. Mg(2+) is required as a cofactor. An intermediate of this reaction is the autophosphorylated ppk in which a phosphate is covalently linked to a histidine residue through a N-P bond.

It catalyses the reaction [phosphate](n) + ATP = [phosphate](n+1) + ADP. In terms of biological role, catalyzes the reversible transfer of the terminal phosphate of ATP to form a long-chain polyphosphate (polyP). The protein is Polyphosphate kinase of Helicobacter pylori (strain J99 / ATCC 700824) (Campylobacter pylori J99).